The chain runs to 183 residues: Ribosome-recycling factor (183 aa).

This sequence belongs to the RRF family.

It localises to the cytoplasm. In terms of biological role, responsible for the release of ribosomes from messenger RNA at the termination of protein biosynthesis. May increase the efficiency of translation by recycling ribosomes from one round of translation to another. In Afipia carboxidovorans (strain ATCC 49405 / DSM 1227 / KCTC 32145 / OM5) (Oligotropha carboxidovorans), this protein is Ribosome-recycling factor.